The following is a 511-amino-acid chain: GATOR complex protein NPRL3 (511 aa).

The disordered stretch occupies residues 37-58 (KPATKAPSKDPQPSSSNPGQCV).

Belongs to the NPR3 family. As to quaternary structure, probably part of the GATOR complex.

It localises to the lysosome membrane. As a component of the GATOR complex may function in the amino acid-sensing branch of the TORC1 signaling pathway. In Caenorhabditis elegans, this protein is GATOR complex protein NPRL3 (nprl-3).